The primary structure comprises 140 residues: Organic hydroperoxide resistance protein-like (140 aa).

Belongs to the OsmC/Ohr family.

This Staphylococcus aureus (strain bovine RF122 / ET3-1) protein is Organic hydroperoxide resistance protein-like.